A 571-amino-acid polypeptide reads, in one-letter code: MTLSPEDLKTIEKYAYQNAVKYGKAPQPKAVMGKVMGECPQLRSDPNAVSEALKVIIPEIAKGNPETWETKLSEIAPELIEALSVKKEPDKGLKPLEGAENGKVVMRFAPNPNGPATLGSARGMVVNSEYVKMYGGKFVLRFDDTDPDIKRPLLQAYDWYLDDFKWLGVVPDQVVYASDHFPMYYDYARKLIEMGKAYVCFCKGGDFKRFKDAKQSCPHRDTSPEENLMHWEKMLAGEYEDQQAVLRIKTDIKHKDPALRDWGAFRIRKMSHPRPEIGNKYVVWPLLDFAGAIEDHELGMTHIIRGKDLIDSEKRQGYIYKYFGWKYPRTTNWGRVKIHEFGKFSTSTLRKAIEAGEYSGWDDPRLPTIRAIRRRGIQAEALKKFMIEMGVGMTDVSISMESLYAENRKIVDPIANRYFFVWNPVELEITDAEPTVAKLPLHPTDHKRGFREIAVGNKVLVCTEDVEKLEVGSIIRLKDFCNIEITSLSPLQAKLSDVSLEALKKAKAKIIHWAPLDGINVKVRGPEGDLNGIGEQGIAAELDKIVQFERFGFCRIDAVSEDEIVAYFAHK.

Residues 110–120 (PNPNGPATLGS) carry the 'HIGH' region motif.

It belongs to the class-I aminoacyl-tRNA synthetase family. Glutamate--tRNA ligase type 2 subfamily.

The protein localises to the cytoplasm. The enzyme catalyses tRNA(Glu) + L-glutamate + ATP = L-glutamyl-tRNA(Glu) + AMP + diphosphate. Its function is as follows. Catalyzes the attachment of glutamate to tRNA(Glu) in a two-step reaction: glutamate is first activated by ATP to form Glu-AMP and then transferred to the acceptor end of tRNA(Glu). The chain is Glutamate--tRNA ligase from Methanosarcina barkeri (strain Fusaro / DSM 804).